Here is a 196-residue protein sequence, read N- to C-terminus: Neuropeptide prohormone-4 (196 aa).

A signal peptide spans 1–25; sequence MSSPLRMDVTFLLAAIAVTWVCGLK. In terms of domain architecture, LDL-receptor class A spans 50-90; the sequence is DCDIASPFKCEESPTCLRLFQVCNGRWDCEHGSDEDNALCA. 3 disulfides stabilise this stretch: Cys-51–Cys-65, Cys-59–Cys-78, and Cys-72–Cys-89.

Expressed by the venom duct.

Its subcellular location is the secreted. This is Neuropeptide prohormone-4 from Conus victoriae (Queen Victoria cone).